Here is a 275-residue protein sequence, read N- to C-terminus: Seminase (275 aa).

A signal peptide spans 1–19; that stretch reads MKRLLFLFLLAGILINNHA. The N-linked (GlcNAc...) asparagine glycan is linked to Asn-23. The Peptidase S1 domain occupies 44-268; it reads VIGGRVTTNA…VKPFIVKGIK (225 aa). An intrachain disulfide couples Cys-70 to Cys-86. Residues His-85 and Asp-131 each act as charge relay system in the active site. 2 disulfides stabilise this stretch: Cys-194–Cys-210 and Cys-220–Cys-244. Ser-224 acts as the Charge relay system in catalysis.

This sequence belongs to the peptidase S1 family. Undergoes cleavage in the male during mating with a cleaved product detected in the ejaculatory duct and/or bulb of males by 8-10 minutes after the start of mating. Further cleavage occurs in the mated female. In terms of tissue distribution, produced in the male accessory glands and secreted into seminal fluid.

The protein localises to the secreted. Its function is as follows. Seminal fluid protease which is required for cleavage and probably also activation of the metalloprotease Semp1. Also required for a number of female post-mating responses independent of Semp1 including egg laying and sperm usage. In Drosophila melanogaster (Fruit fly), this protein is Seminase.